Reading from the N-terminus, the 358-residue chain is Methylthioribose-1-phosphate isomerase (358 aa).

Met1 carries the N-acetylmethionine modification. Asp248 acts as the Proton donor in catalysis.

It belongs to the eIF-2B alpha/beta/delta subunits family. MtnA subfamily.

The protein resides in the cytoplasm. Its subcellular location is the nucleus. The enzyme catalyses 5-(methylsulfanyl)-alpha-D-ribose 1-phosphate = 5-(methylsulfanyl)-D-ribulose 1-phosphate. Its pathway is amino-acid biosynthesis; L-methionine biosynthesis via salvage pathway; L-methionine from S-methyl-5-thio-alpha-D-ribose 1-phosphate: step 1/6. Its function is as follows. Catalyzes the interconversion of methylthioribose-1-phosphate (MTR-1-P) into methylthioribulose-1-phosphate (MTRu-1-P). The protein is Methylthioribose-1-phosphate isomerase of Bos taurus (Bovine).